Reading from the N-terminus, the 247-residue chain is MSRLVLAIGNSRWHWGIFSRDQAPQFWDAIAPHQPFSRSDLATFLQAQDPAIVADTPIAIASVVPQQLALLPEDWPQRRLQLRDVPLTNCYPQLGLDRAIALYEAGCQAGWPVLMIDCGTAITINAGDAEGQFAGGAILPGVTLQLRSLAQGTAALPSVEISAEGDRWGMDTQSAIASGVIYGIAGALRGFIEDWRSHHPQRPIYFTGGDGELLAKLLTDLPDIRVEPHLLLHGIDRLAQAMMTDPD.

Residue 7-14 (AIGNSRWH) participates in ATP binding. Substrate-binding positions include Tyr-91 and 95–98 (GLDR). Asp-97 serves as the catalytic Proton acceptor. Asp-117 contacts K(+). Position 120 (Thr-120) interacts with ATP. Thr-172 is a substrate binding site.

It belongs to the type III pantothenate kinase family. Homodimer. NH4(+) serves as cofactor. K(+) is required as a cofactor.

It is found in the cytoplasm. The catalysed reaction is (R)-pantothenate + ATP = (R)-4'-phosphopantothenate + ADP + H(+). The protein operates within cofactor biosynthesis; coenzyme A biosynthesis; CoA from (R)-pantothenate: step 1/5. Functionally, catalyzes the phosphorylation of pantothenate (Pan), the first step in CoA biosynthesis. This Synechococcus elongatus (strain ATCC 33912 / PCC 7942 / FACHB-805) (Anacystis nidulans R2) protein is Type III pantothenate kinase.